Here is a 244-residue protein sequence, read N- to C-terminus: Nicotinamidase 1 (244 aa).

This sequence belongs to the isochorismatase family. In terms of tissue distribution, expressed in roots and stems, and at lower levels in flowers, siliques and leaves.

It catalyses the reaction nicotinamide + H2O = nicotinate + NH4(+). It participates in cofactor biosynthesis; nicotinate biosynthesis; nicotinate from nicotinamide: step 1/1. Catalyzes the deamidation of nicotinamide, an early step in the NAD(+) salvage pathway. Prevents the accumulation of intracellular nicotinamide, a known inhibitor of poly(ADP-ribose) polymerases (PARP enzymes). The sequence is that of Nicotinamidase 1 from Arabidopsis thaliana (Mouse-ear cress).